A 249-amino-acid polypeptide reads, in one-letter code: Adenosylcobinamide-GDP ribazoletransferase (249 aa).

Transmembrane regions (helical) follow at residues 29 to 49 (LYWF…CAWL), 50 to 70 (PLSI…GFIV), 104 to 124 (VGSF…VAIL), 131 to 151 (AFAL…LLAA), 165 to 185 (GFVG…SLMM), 194 to 214 (PFLL…IGFL), and 226 to 246 (VLGA…GVAF).

Belongs to the CobS family. Mg(2+) serves as cofactor.

It is found in the cell inner membrane. It catalyses the reaction alpha-ribazole + adenosylcob(III)inamide-GDP = adenosylcob(III)alamin + GMP + H(+). The enzyme catalyses alpha-ribazole 5'-phosphate + adenosylcob(III)inamide-GDP = adenosylcob(III)alamin 5'-phosphate + GMP + H(+). It functions in the pathway cofactor biosynthesis; adenosylcobalamin biosynthesis; adenosylcobalamin from cob(II)yrinate a,c-diamide: step 7/7. Functionally, joins adenosylcobinamide-GDP and alpha-ribazole to generate adenosylcobalamin (Ado-cobalamin). Also synthesizes adenosylcobalamin 5'-phosphate from adenosylcobinamide-GDP and alpha-ribazole 5'-phosphate. In Chlorobium phaeovibrioides (strain DSM 265 / 1930) (Prosthecochloris vibrioformis (strain DSM 265)), this protein is Adenosylcobinamide-GDP ribazoletransferase.